The following is an 877-amino-acid chain: Alanine--tRNA ligase (877 aa).

Zn(2+) is bound by residues His-563, His-567, Cys-667, and His-671.

It belongs to the class-II aminoacyl-tRNA synthetase family. Zn(2+) is required as a cofactor.

Its subcellular location is the cytoplasm. It catalyses the reaction tRNA(Ala) + L-alanine + ATP = L-alanyl-tRNA(Ala) + AMP + diphosphate. Functionally, catalyzes the attachment of alanine to tRNA(Ala) in a two-step reaction: alanine is first activated by ATP to form Ala-AMP and then transferred to the acceptor end of tRNA(Ala). Also edits incorrectly charged Ser-tRNA(Ala) and Gly-tRNA(Ala) via its editing domain. This Cytophaga hutchinsonii (strain ATCC 33406 / DSM 1761 / CIP 103989 / NBRC 15051 / NCIMB 9469 / D465) protein is Alanine--tRNA ligase.